A 565-amino-acid chain; its full sequence is Periplasmic trehalase (565 aa).

The signal sequence occupies residues Met1–Ala30. Substrate-binding positions include Arg152, Trp159–Asp160, Asn196, Arg205–Gln207, Arg277–Glu279, and Gly310. Residues Asp312 and Glu496 each act as proton donor/acceptor in the active site. Residue Glu511 participates in substrate binding. The segment at Pro538–Pro565 is disordered. Polar residues predominate over residues Thr548–Pro565.

The protein belongs to the glycosyl hydrolase 37 family. As to quaternary structure, monomer.

Its subcellular location is the periplasm. The enzyme catalyses alpha,alpha-trehalose + H2O = alpha-D-glucose + beta-D-glucose. Provides the cells with the ability to utilize trehalose at high osmolarity by splitting it into glucose molecules that can subsequently be taken up by the phosphotransferase-mediated uptake system. The chain is Periplasmic trehalase from Escherichia coli O8 (strain IAI1).